Reading from the N-terminus, the 465-residue chain is Ribulose bisphosphate carboxylase large chain (465 aa).

N6,N6,N6-trimethyllysine is present on K4. 2 residues coordinate substrate: N113 and T163. The active-site Proton acceptor is K165. K167 contacts substrate. Residues K191, D193, and E194 each contribute to the Mg(2+) site. Position 191 is an N6-carboxylysine (K191). The active-site Proton acceptor is the H284. The substrate site is built by R285, H317, and S369.

The protein belongs to the RuBisCO large chain family. Type I subfamily. As to quaternary structure, heterohexadecamer of 8 large chains and 8 small chains; disulfide-linked. The disulfide link is formed within the large subunit homodimers. The cofactor is Mg(2+). In terms of processing, the disulfide bond which can form in the large chain dimeric partners within the hexadecamer appears to be associated with oxidative stress and protein turnover.

It localises to the plastid. It is found in the chloroplast. It catalyses the reaction 2 (2R)-3-phosphoglycerate + 2 H(+) = D-ribulose 1,5-bisphosphate + CO2 + H2O. It carries out the reaction D-ribulose 1,5-bisphosphate + O2 = 2-phosphoglycolate + (2R)-3-phosphoglycerate + 2 H(+). RuBisCO catalyzes two reactions: the carboxylation of D-ribulose 1,5-bisphosphate, the primary event in carbon dioxide fixation, as well as the oxidative fragmentation of the pentose substrate in the photorespiration process. Both reactions occur simultaneously and in competition at the same active site. The chain is Ribulose bisphosphate carboxylase large chain from Senega cruciata (Cross-leaved milkwort).